The primary structure comprises 61 residues: Large ribosomal subunit protein uL30 (61 aa).

This sequence belongs to the universal ribosomal protein uL30 family. Part of the 50S ribosomal subunit.

In Francisella philomiragia subsp. philomiragia (strain ATCC 25017 / CCUG 19701 / FSC 153 / O#319-036), this protein is Large ribosomal subunit protein uL30.